We begin with the raw amino-acid sequence, 152 residues long: Large ribosomal subunit protein bL9 (152 aa).

It belongs to the bacterial ribosomal protein bL9 family.

Binds to the 23S rRNA. In Microcystis aeruginosa (strain NIES-843 / IAM M-2473), this protein is Large ribosomal subunit protein bL9.